Here is a 483-residue protein sequence, read N- to C-terminus: Glutamate--tRNA ligase (483 aa).

A 'HIGH' region motif is present at residues 9-19; sequence PSPTGYLHIGN. Residues 250–254 carry the 'KMSKS' region motif; that stretch reads KLSKR. K253 contributes to the ATP binding site.

This sequence belongs to the class-I aminoacyl-tRNA synthetase family. Glutamate--tRNA ligase type 1 subfamily. In terms of assembly, monomer.

It localises to the cytoplasm. It carries out the reaction tRNA(Glu) + L-glutamate + ATP = L-glutamyl-tRNA(Glu) + AMP + diphosphate. Catalyzes the attachment of glutamate to tRNA(Glu) in a two-step reaction: glutamate is first activated by ATP to form Glu-AMP and then transferred to the acceptor end of tRNA(Glu). The polypeptide is Glutamate--tRNA ligase (Blochmanniella floridana).